Here is a 520-residue protein sequence, read N- to C-terminus: Glutamyl-tRNA(Gln) amidotransferase subunit A (520 aa).

Residues lysine 80 and serine 155 each act as charge relay system in the active site. Serine 179 (acyl-ester intermediate) is an active-site residue.

It belongs to the amidase family. GatA subfamily. Heterotrimer of A, B and C subunits.

The enzyme catalyses L-glutamyl-tRNA(Gln) + L-glutamine + ATP + H2O = L-glutaminyl-tRNA(Gln) + L-glutamate + ADP + phosphate + H(+). In terms of biological role, allows the formation of correctly charged Gln-tRNA(Gln) through the transamidation of misacylated Glu-tRNA(Gln) in organisms which lack glutaminyl-tRNA synthetase. The reaction takes place in the presence of glutamine and ATP through an activated gamma-phospho-Glu-tRNA(Gln). The sequence is that of Glutamyl-tRNA(Gln) amidotransferase subunit A from Renibacterium salmoninarum (strain ATCC 33209 / DSM 20767 / JCM 11484 / NBRC 15589 / NCIMB 2235).